The sequence spans 704 residues: Elongation factor G 1 (704 aa).

The tr-type G domain occupies 8–290; the sequence is ERYRNIGICA…CVVEYMPAPT (283 aa). GTP is bound by residues 17–24, 88–92, and 142–145; these read AHVDAGKT, DTPGH, and NKMD.

The protein belongs to the TRAFAC class translation factor GTPase superfamily. Classic translation factor GTPase family. EF-G/EF-2 subfamily.

Its subcellular location is the cytoplasm. In terms of biological role, catalyzes the GTP-dependent ribosomal translocation step during translation elongation. During this step, the ribosome changes from the pre-translocational (PRE) to the post-translocational (POST) state as the newly formed A-site-bound peptidyl-tRNA and P-site-bound deacylated tRNA move to the P and E sites, respectively. Catalyzes the coordinated movement of the two tRNA molecules, the mRNA and conformational changes in the ribosome. In Pseudoalteromonas translucida (strain TAC 125), this protein is Elongation factor G 1.